The following is a 321-amino-acid chain: MFHSLVLMACALAALSVAQGAGSARSKSLPLSLSLSVSVSSSLASASSPGAAADPTAAFTVTATAPTPASAPFAGKQLNRCRQSCYQQLSKDWHYCKDSVDCTNCCQKLVAPFELRILKAQRQESLVLTDIGWDEMIANASRQCLITWEVSGGGLIGNLLTDTARAELSLWPDTVYNIQVKCKHKLTGLMRRSIKLNVDTSQLVGTTTTTTTSKSSIQRQHLEQPVDHTDALEHSQHIRIPRPTDRVYIISALPTPSELGGVVYPAFGALAFFLALLVMFLFLRPQRKRFPLDADSADTATLIGRSSSSSRNSMDASTLHV.

The first 18 residues, 1-18 (MFHSLVLMACALAALSVA), serve as a signal peptide directing secretion. At 19–261 (QGAGSARSKS…ALPTPSELGG (243 aa)) the chain is on the extracellular side. Residues 262–282 (VVYPAFGALAFFLALLVMFLF) traverse the membrane as a helical segment. Residues 283–321 (LRPQRKRFPLDADSADTATLIGRSSSSSRNSMDASTLHV) are Cytoplasmic-facing.

It is found in the membrane. In terms of biological role, involved in the normal targeting of ventral muscle, muscle 12, by motoneurons. May function as an axon guidance molecule involved in neuromuscular specificity. In Drosophila melanogaster (Fruit fly), this protein is Transmembrane protein fend (fend).